Reading from the N-terminus, the 229-residue chain is HTH-type transcriptional regulator HbdR (229 aa).

An HTH tetR-type domain is found at 20-80; sequence EERRHQIISA…LTLKNVLDTY (61 aa). The H-T-H motif DNA-binding region spans 43–62; sequence TILQIAREAKVSTGLIYQYF.

Homodimer in solution.

Its activity is regulated as follows. Activity is regulated by the effector molecules 3-hydroxybenzoyl-CoA and benzoyl-CoA, which bind to HbdR, alleviating its repression on the three target promoters and inducing the expression of the hbd genes. Functionally, transcriptional regulator that controls the expression of the hbd cluster, which contains three catabolic operons and is responsible for the anaerobic degradation of 3-hydroxybenzoate. HbdR suppresses the activity of the three catabolic promoters (PhbdN, PhbdE and PhbdH) by binding to a conserved palindromic operator box. In addition, it slightly increases activity of its own promoter (PhbdR). The HbdR-mediated repression of hbd genes may play a crucial biological role in maintaining requisite hydroxybenzoate levels in the cell. The sequence is that of HTH-type transcriptional regulator HbdR from Aromatoleum sp. (strain CIB) (Azoarcus sp. (strain CIB)).